A 385-amino-acid polypeptide reads, in one-letter code: Putative ribosomal RNA large subunit methyltransferase MJ1653 (385 aa).

One can recognise a PUA domain in the interval T2–I81.

The protein belongs to the methyltransferase superfamily. RlmI family.

The protein localises to the cytoplasm. The chain is Putative ribosomal RNA large subunit methyltransferase MJ1653 from Methanocaldococcus jannaschii (strain ATCC 43067 / DSM 2661 / JAL-1 / JCM 10045 / NBRC 100440) (Methanococcus jannaschii).